A 1312-amino-acid chain; its full sequence is MRNNLIYTMFLSCLHFETFCQNTTTSNDDCEALSQDLDNKNPVECCTTEAFDFLDKKYPNWRKVNKYVRSPYINELRFMGCCNKTISTSAILTTTPLTTSSTTLEIYTTDSDSTTAETTSVPTTTTSIQCGVLANTSCCNLKVTECLSKQYEDWRNVTLIKGYERELEKCDCVLTSSSTETGTVKFLDREFFRVFSSAEIASTTSLPTTTSPSLNCYWLSEPSNFSEWIDGKQTNLRYNGGCCSETSIQVLNSSDSTRWILTTSDSWNKANALINLLYCTPNACPQQSMLWTNCSNLSTTTSSSTMLSSTTLLTTETETRESSSTGSTQTTTPSTEPSTTITTPMEQSSTVSSVQKTRTSEDKPSSSTTVPTSASTSESSTSSPMAETSSSSTTSQSSPASTSTVPESSTVGSTPTTGLTTLSTNEQSTSTSSGGHSTSTFGTTSETPETSTDFTATSTSSSSDSSTQSSNAQTSTIENGSTTTNFTSAPSTSSTPATPTTTYNWPTGGTTWMLPSGEIVQAHKTFFSSFNYFQVLSESLIAYPNCTTVLMQLIYNPRTKETRTEITSDAEGCKKTSSTPTPSSTSVHSTTATPSTTPGTTTYNWPTGGTTRMLPSGEIILSESLIAYPNCTTVLMQLIYNPSTKETRTETTTDADGCKKTSSTSSSTPSLKHSTTPTPTPGTTTYNWPTGGTTRMLPSGEIILSESLIAYPNCTTVLMQLIYTPSTNKTRTETTTDTEGCKKTSTISSSSSKFSITPTPTPSSGTTTYNWPTGGTTRTLPSGEIILSESLIAFQNCTTVLMQLIYNPSTNKTRTETTTDAEGCKKTSSTSKISTTPTSPTSSKPTPTSTSMTTTYNWPTGGTTRTLPSGEIILSESLIAYKNCTTVLMQLIYNPSTNKTRTETTTDAQGCKATSSTSLKPTSPSSSTASPPTTTYNWPTGGTTRTLPSGEIILSESLIAYKNCTTVLMQLIYNPSTNKTRTETTTDAQGCKATITTPTPITTTYNWPTGGTTRTLPSGEIILSESLIAYKNCTTVLMQLIYNPSTNKTRTETTSDAQGCKATSTTQTPTTFNWPTGGTTRTLPSGEIILSESLIAYKNCTTVLMQLIYNPSKNTTRTETTSDAEGCKATSSGTTSTMSPGTTGGTTVSRTTNSNNPIDSSTLETTTFAWPTGGTTRMLPSGEIIISESLTAFPNCTTVLKQLVYNPTTNTTRTDTISDSEGCKATSTAKPTTVISSTATCSSLNLNLNSTTRPTSSEIKDSYSVGEKIYHICEKDYSFEIALQPLKIYQCLNGGAWSGTPEKCVATGKSEL.

The first 20 residues, 1–20 (MRNNLIYTMFLSCLHFETFC), serve as a signal peptide directing secretion. Residues 299-344 (TTTSSSTMLSSTTLLTTETETRESSSTGSTQTTTPSTEPSTTITTP) show a composition bias toward low complexity. Disordered regions lie at residues 299-503 (TTTS…TTTY), 565-609 (EITS…PTGG), 645-692 (KETR…PTGG), 749-775 (SSSS…PTGG), 812-864 (KTRT…GGTT), 899-942 (KTRT…PTGG), 1048-1079 (KTRT…TGGT), and 1114-1165 (NTTR…TLET). Residues 345-357 (MEQSSTVSSVQKT) are compositionally biased toward polar residues. The segment covering 365–503 (SSSTTVPTSA…STPATPTTTY (139 aa)) has biased composition (low complexity). A compositionally biased stretch (basic and acidic residues) spans 565–574 (EITSDAEGCK). Low complexity predominate over residues 576–609 (TSSTPTPSSTSVHSTTATPSTTPGTTTYNWPTGG). Residues 645 to 659 (KETRTETTTDADGCK) show a composition bias toward basic and acidic residues. Residues 660-692 (KTSSTSSSTPSLKHSTTPTPTPGTTTYNWPTGG) are compositionally biased toward low complexity. Positions 813 to 825 (TRTETTTDAEGCK) are enriched in basic and acidic residues. Over residues 826 to 864 (KTSSTSKISTTPTSPTSSKPTPTSTSMTTTYNWPTGGTT) the composition is skewed to low complexity. Positions 899–908 (KTRTETTTDA) are enriched in polar residues. A compositionally biased stretch (low complexity) spans 914 to 942 (TSSTSLKPTSPSSSTASPPTTTYNWPTGG). Over residues 1048–1057 (KTRTETTSDA) the composition is skewed to polar residues. The span at 1063 to 1076 (TSTTQTPTTFNWPT) shows a compositional bias: low complexity. The segment covering 1114–1123 (NTTRTETTSD) has biased composition (polar residues). The span at 1130–1154 (TSSGTTSTMSPGTTGGTTVSRTTNS) shows a compositional bias: low complexity. Residues 1155–1164 (NNPIDSSTLE) are compositionally biased toward polar residues. The region spanning 1239–1306 (ATCSSLNLNL…WSGTPEKCVA (68 aa)) is the Sushi domain. 2 cysteine pairs are disulfide-bonded: C1241/C1291 and C1273/C1304.

It is found in the secreted. This is an uncharacterized protein from Caenorhabditis elegans.